The chain runs to 1196 residues: Major DNA-binding protein (1196 aa).

A zinc finger lies at 499 to 512 (CNLCTFDTRHACVH). Short sequence motifs (required for filament formation) lie at residues 843 to 844 (FW) and 1142 to 1144 (FNF). The tract at residues 1158–1196 (GGPGAPGPAFAGRKRAFHGDDPFGEGPPDKKGDLTLDML) is disordered. Residues 1170-1196 (RKRAFHGDDPFGEGPPDKKGDLTLDML) form a required for nuclear localization region. Residues 1174–1196 (FHGDDPFGEGPPDKKGDLTLDML) show a composition bias toward basic and acidic residues.

The protein belongs to the herpesviridae major DNA-binding protein family. As to quaternary structure, homooligomers. Forms double-helical filaments necessary for the formation of replication compartments within the host nucleus. Interacts with the origin-binding protein. Interacts with the helicase primase complex; this interaction stimulates primer synthesis activity of the helicase-primase complex. Interacts with the DNA polymerase. Interacts with the alkaline exonuclease; this interaction increases its nuclease processivity. Interacts with ICP27; this interaction plays a role in the stimulation of late gene transcription.

Its subcellular location is the host nucleus. Plays several crucial roles in viral infection. Participates in the opening of the viral DNA origin to initiate replication by interacting with the origin-binding protein. May disrupt loops, hairpins and other secondary structures present on ssDNA to reduce and eliminate pausing of viral DNA polymerase at specific sites during elongation. Promotes viral DNA recombination by performing strand-transfer, characterized by the ability to transfer a DNA strand from a linear duplex to a complementary single-stranded DNA circle. Can also catalyze the renaturation of complementary single strands. Additionally, reorganizes the host cell nucleus, leading to the formation of prereplicative sites and replication compartments. This process is driven by the protein which can form double-helical filaments in the absence of DNA. This Homo sapiens (Human) protein is Major DNA-binding protein.